A 346-amino-acid polypeptide reads, in one-letter code: Pheromone receptor 2 (346 aa).

Helical transmembrane passes span 8–28 (VSFGVLCLLAGCISTSSCLIH), 34–54 (IGVLLMMFWCFTGLVNKGINA), 71–94 (LSAIIERTWQFGLCCSALCVLQRL), 115–135 (LIDFGVGLGLPALQIPMFFIV), 160–180 (FIYHLWRLLVSLVCAVYAVLV), 219–239 (VLVSAGQFYVIIQSLQIGGLL), and 270–290 (LSILRWFSLTPAMALFVFFGL).

The protein belongs to the G-protein coupled receptor 4 family.

The protein resides in the membrane. Receptor for the A1 pheromone, a prenylated mating factor. This chain is Pheromone receptor 2 (PRA2), found in Mycosarcoma maydis (Corn smut fungus).